A 158-amino-acid polypeptide reads, in one-letter code: Kalata-B3/B6 (158 aa).

The first 22 residues, 1-22, serve as a signal peptide directing secretion; that stretch reads MAKFTKSLVLCLLLAAFVGAFG. The propeptide occupies 23–66; that stretch reads AELSEADKANVVNEIAANIQREILKGVKSSETTLTMFLKEMQLK. The cyclopeptide (Gly-Asn) cross-link spans 67–96; sequence GLPTCGETCFGGTCNTPGCSCSSWPICTRN. Intrachain disulfides connect Cys-71-Cys-85, Cys-75-Cys-87, and Cys-80-Cys-93. The propeptide occupies 97–121; that stretch reads GLPKRAGVKSSETTLTMFLKEMQLK. Residues 122-151 constitute a cross-link (cyclopeptide (Gly-Asp)); it reads GLPTCGETCFGGTCNTPGCTCDPWPICTRD. Intrachain disulfides connect Cys-126–Cys-140, Cys-130–Cys-142, and Cys-135–Cys-148. Positions 152 to 158 are excised as a propeptide; that stretch reads GLPSAAA.

Belongs to the cyclotide family. Moebius subfamily. In terms of processing, kalata-B3 and kalata-B6 are cyclic peptides.

Probably participates in a plant defense mechanism. Has hemolytic activity. This chain is Kalata-B3/B6 (OAK2), found in Oldenlandia affinis.